A 373-amino-acid polypeptide reads, in one-letter code: G protein-coupled receptor 137Ba (373 aa).

Topologically, residues 1 to 15 are lumenal; that stretch reads MQKDSLPTLSPAVPP. A helical membrane pass occupies residues 16–36; that stretch reads YVMLGLTVAYTIFYCLLFVFV. Residues 37–55 lie on the Cytoplasmic side of the membrane; that stretch reads YVQLWLVLRYRHKRFSYQT. Residues 56–76 traverse the membrane as a helical segment; sequence VFLFLCLLWAALRALLFSFYF. Topologically, residues 77–84 are lumenal; sequence KNCVTANT. The chain crosses the membrane as a helical span at residues 85–105; it reads LGPFCFWLLYCFPVCLQFFTL. Residues 106–135 lie on the Cytoplasmic side of the membrane; the sequence is SLMNLYFAQVIFKAKSKYSPELQKYRLPLY. A helical transmembrane segment spans residues 136-156; that stretch reads LLFLSISLLFLLVNLTCALLV. Residues 157–176 are Lumenal-facing; it reads KINRANTETVVLVRVTVNDS. Residues 177–197 traverse the membrane as a helical segment; sequence LFVLCAVSLSLCLYRIAKMSL. Over 198 to 213 the chain is Cytoplasmic; the sequence is ANIYLEAKGTSVCQVT. A helical membrane pass occupies residues 214–234; sequence LIGVTVVLLYSSRACYNLVVL. Residues 235-268 are Lumenal-facing; it reads ALTKIKSINSFDYDWYNVSDQADLKSTLGDAGYV. The chain crosses the membrane as a helical span at residues 269 to 289; that stretch reads VFGVILFVWELLPTSLVVYFF. Residues 290–373 lie on the Cytoplasmic side of the membrane; sequence RVRKPTLDRS…HLAPEELNPY (84 aa).

This sequence belongs to the GPR137 family.

Its subcellular location is the lysosome membrane. Functionally, lysosomal integral membrane protein that regulates the localization and activity of mTORC1, a signaling complex promoting cell growth in response to growth factors, energy levels, and amino acids. Interacts with Rag GTPases and increases the lysosomial localization and activity of Rag GTPases and thereby regulates mTORC1 translocation and activity in lysosome. Also acts as a negative regulator of osteoclast activity. May be involved in interleukin-4-induced M2 macrophage polarization. Its function is as follows. Also acts as a negative regulator of osteoclast activity. May be involved in interleukin-4-induced M2 macrophage polarization. The polypeptide is G protein-coupled receptor 137Ba (Danio rerio (Zebrafish)).